The primary structure comprises 353 residues: Photosystem II protein D1 (353 aa).

T2 is modified (N-acetylthreonine). T2 is modified (phosphothreonine). The next 3 helical transmembrane spans lie at 29–46 (YIGW…TATS), 118–133 (HFLL…EWEL), and 142–156 (WIVV…AATA). Position 118 (H118) interacts with chlorophyll a. Position 126 (Y126) interacts with pheophytin a. Residues D170 and E189 each coordinate [CaMn4O5] cluster. The helical transmembrane segment at 197-218 (FHMLGVAGVFGGSLFSAMHGSL) threads the bilayer. H198 contacts chlorophyll a. A quinone is bound by residues H215 and 264-265 (SF). Fe cation is bound at residue H215. H272 provides a ligand contact to Fe cation. The helical transmembrane segment at 274-288 (FLAAWPVVGIWFTAL) threads the bilayer. H332, E333, D342, and A344 together coordinate [CaMn4O5] cluster. The propeptide occupies 345-353 (AVDAPSISG).

The protein belongs to the reaction center PufL/M/PsbA/D family. In terms of assembly, PSII is composed of 1 copy each of membrane proteins PsbA, PsbB, PsbC, PsbD, PsbE, PsbF, PsbH, PsbI, PsbJ, PsbK, PsbL, PsbM, PsbT, PsbX, PsbY, PsbZ, Psb30/Ycf12, at least 3 peripheral proteins of the oxygen-evolving complex and a large number of cofactors. It forms dimeric complexes. The D1/D2 heterodimer binds P680, chlorophylls that are the primary electron donor of PSII, and subsequent electron acceptors. It shares a non-heme iron and each subunit binds pheophytin, quinone, additional chlorophylls, carotenoids and lipids. D1 provides most of the ligands for the Mn4-Ca-O5 cluster of the oxygen-evolving complex (OEC). There is also a Cl(-1) ion associated with D1 and D2, which is required for oxygen evolution. The PSII complex binds additional chlorophylls, carotenoids and specific lipids. serves as cofactor. In terms of processing, tyr-161 forms a radical intermediate that is referred to as redox-active TyrZ, YZ or Y-Z. Post-translationally, C-terminally processed by CTPA; processing is essential to allow assembly of the oxygen-evolving complex and thus photosynthetic growth.

It localises to the plastid. It is found in the chloroplast thylakoid membrane. It carries out the reaction 2 a plastoquinone + 4 hnu + 2 H2O = 2 a plastoquinol + O2. Its function is as follows. Photosystem II (PSII) is a light-driven water:plastoquinone oxidoreductase that uses light energy to abstract electrons from H(2)O, generating O(2) and a proton gradient subsequently used for ATP formation. It consists of a core antenna complex that captures photons, and an electron transfer chain that converts photonic excitation into a charge separation. The D1/D2 (PsbA/PsbD) reaction center heterodimer binds P680, the primary electron donor of PSII as well as several subsequent electron acceptors. This chain is Photosystem II protein D1, found in Vicia faba (Broad bean).